The primary structure comprises 35 residues: Cycloamanide F proprotein (35 aa).

Positions 1 to 10 (MSDINATRLP) are excised as a propeptide. The segment at residues 11–18 (IVGILGLP) is a cross-link (cyclopeptide (Ile-Pro)). Residues 19 to 35 (CIGDDVNSTLTHGEDLC) constitute a propeptide that is removed on maturation.

It belongs to the MSDIN fungal toxin family. In terms of processing, processed by the macrocyclase-peptidase enzyme POPB to yield a cyclic decapeptide. POPB first removes 10 residues from the N-terminus. Conformational trapping of the remaining peptide forces the enzyme to release this intermediate rather than proceed to macrocyclization. The enzyme rebinds the remaining peptide in a different conformation and catalyzes macrocyclization of the N-terminal 8 residues.

Functionally, cyclic octapeptide that belongs to the MSDIN-like toxin family responsible for a large number of food poisoning cases and deaths. Cycloaminide E is structurally related to other cycloamanides that are non-toxic to mammals but show immunosuppressive activity. In Amanita phalloides (Death cap), this protein is Cycloamanide F proprotein.